We begin with the raw amino-acid sequence, 488 residues long: 3-octaprenyl-4-hydroxybenzoate carboxy-lyase (488 aa).

N172 is a Mn(2+) binding site. Prenylated FMN contacts are provided by residues 175 to 177 (IYR), 189 to 191 (RWL), and 194 to 195 (RG). Position 238 (E238) interacts with Mn(2+). D287 functions as the Proton donor in the catalytic mechanism.

Belongs to the UbiD family. Homohexamer. Prenylated FMN is required as a cofactor. Mn(2+) serves as cofactor.

It is found in the cell membrane. It carries out the reaction a 4-hydroxy-3-(all-trans-polyprenyl)benzoate + H(+) = a 2-(all-trans-polyprenyl)phenol + CO2. The protein operates within cofactor biosynthesis; ubiquinone biosynthesis. In terms of biological role, catalyzes the decarboxylation of 3-octaprenyl-4-hydroxy benzoate to 2-octaprenylphenol, an intermediate step in ubiquinone biosynthesis. In Pseudoalteromonas translucida (strain TAC 125), this protein is 3-octaprenyl-4-hydroxybenzoate carboxy-lyase.